A 246-amino-acid polypeptide reads, in one-letter code: 1-(5-phosphoribosyl)-5-[(5-phosphoribosylamino)methylideneamino] imidazole-4-carboxamide isomerase (246 aa).

The active-site Proton acceptor is the aspartate 10. The active-site Proton donor is aspartate 135.

It belongs to the HisA/HisF family.

The protein resides in the cytoplasm. The enzyme catalyses 1-(5-phospho-beta-D-ribosyl)-5-[(5-phospho-beta-D-ribosylamino)methylideneamino]imidazole-4-carboxamide = 5-[(5-phospho-1-deoxy-D-ribulos-1-ylimino)methylamino]-1-(5-phospho-beta-D-ribosyl)imidazole-4-carboxamide. It functions in the pathway amino-acid biosynthesis; L-histidine biosynthesis; L-histidine from 5-phospho-alpha-D-ribose 1-diphosphate: step 4/9. The protein is 1-(5-phosphoribosyl)-5-[(5-phosphoribosylamino)methylideneamino] imidazole-4-carboxamide isomerase of Methanococcoides burtonii (strain DSM 6242 / NBRC 107633 / OCM 468 / ACE-M).